The sequence spans 180 residues: Protein GrpE (180 aa).

The disordered stretch occupies residues 1-21 (MSEEVKEQNLPEVEPVQEAAS).

This sequence belongs to the GrpE family. In terms of assembly, homodimer.

Its subcellular location is the cytoplasm. Its function is as follows. Participates actively in the response to hyperosmotic and heat shock by preventing the aggregation of stress-denatured proteins, in association with DnaK and GrpE. It is the nucleotide exchange factor for DnaK and may function as a thermosensor. Unfolded proteins bind initially to DnaJ; upon interaction with the DnaJ-bound protein, DnaK hydrolyzes its bound ATP, resulting in the formation of a stable complex. GrpE releases ADP from DnaK; ATP binding to DnaK triggers the release of the substrate protein, thus completing the reaction cycle. Several rounds of ATP-dependent interactions between DnaJ, DnaK and GrpE are required for fully efficient folding. The polypeptide is Protein GrpE (Campylobacter concisus (strain 13826)).